The primary structure comprises 131 residues: Small ribosomal subunit protein bS6 (131 aa).

The tract at residues 99–131 (ASPMVKAKDERRERREDFATETNEDSDAGDSEE) is disordered. Over residues 104 to 116 (KAKDERRERREDF) the composition is skewed to basic and acidic residues. The span at 120–131 (TNEDSDAGDSEE) shows a compositional bias: acidic residues.

The protein belongs to the bacterial ribosomal protein bS6 family.

Binds together with bS18 to 16S ribosomal RNA. In Sodalis glossinidius (strain morsitans), this protein is Small ribosomal subunit protein bS6.